We begin with the raw amino-acid sequence, 909 residues long: Protein translocase subunit SecA (909 aa).

ATP is bound by residues Gln87, 105-109 (GEGKT), and Asp512. The segment at 863–909 (LVGGGDEDDESIAAHTPMIRDGDKVGRNDPCPCGSGRKYKQCHGKLS) is disordered. Over residues 880–889 (MIRDGDKVGR) the composition is skewed to basic and acidic residues. Positions 893, 895, 904, and 905 each coordinate Zn(2+). Basic residues predominate over residues 899–909 (RKYKQCHGKLS).

The protein belongs to the SecA family. Monomer and homodimer. Part of the essential Sec protein translocation apparatus which comprises SecA, SecYEG and auxiliary proteins SecDF-YajC and YidC. Zn(2+) serves as cofactor.

Its subcellular location is the cell inner membrane. It is found in the cytoplasm. It catalyses the reaction ATP + H2O + cellular proteinSide 1 = ADP + phosphate + cellular proteinSide 2.. Part of the Sec protein translocase complex. Interacts with the SecYEG preprotein conducting channel. Has a central role in coupling the hydrolysis of ATP to the transfer of proteins into and across the cell membrane, serving both as a receptor for the preprotein-SecB complex and as an ATP-driven molecular motor driving the stepwise translocation of polypeptide chains across the membrane. This is Protein translocase subunit SecA from Shewanella putrefaciens (strain CN-32 / ATCC BAA-453).